Consider the following 308-residue polypeptide: Ribosomal RNA small subunit methyltransferase H (308 aa).

Residues 46–48 (AGH), Asp63, Tyr87, Asp108, and Gln115 contribute to the S-adenosyl-L-methionine site. The tract at residues 269–308 (TKRPVEASEEERGRNPRARSAKLRAAEKVAAPEGLPEVEV) is disordered. Residues 271–282 (RPVEASEEERGR) are compositionally biased toward basic and acidic residues.

This sequence belongs to the methyltransferase superfamily. RsmH family.

Its subcellular location is the cytoplasm. It catalyses the reaction cytidine(1402) in 16S rRNA + S-adenosyl-L-methionine = N(4)-methylcytidine(1402) in 16S rRNA + S-adenosyl-L-homocysteine + H(+). Specifically methylates the N4 position of cytidine in position 1402 (C1402) of 16S rRNA. The polypeptide is Ribosomal RNA small subunit methyltransferase H (Deinococcus geothermalis (strain DSM 11300 / CIP 105573 / AG-3a)).